A 422-amino-acid chain; its full sequence is Histidine--tRNA ligase (422 aa).

The protein belongs to the class-II aminoacyl-tRNA synthetase family. In terms of assembly, homodimer.

It localises to the cytoplasm. It catalyses the reaction tRNA(His) + L-histidine + ATP = L-histidyl-tRNA(His) + AMP + diphosphate + H(+). This is Histidine--tRNA ligase from Vibrio atlanticus (strain LGP32) (Vibrio splendidus (strain Mel32)).